The following is a 396-amino-acid chain: Phosphoglycerate kinase (396 aa).

Substrate contacts are provided by residues 21 to 23, Arg-36, 59 to 62, Arg-119, and Arg-156; these read DFN and HLGK. Residues Lys-206, Glu-325, and 352-355 each bind ATP; that span reads GGDS.

Belongs to the phosphoglycerate kinase family. In terms of assembly, monomer.

It is found in the cytoplasm. It catalyses the reaction (2R)-3-phosphoglycerate + ATP = (2R)-3-phospho-glyceroyl phosphate + ADP. Its pathway is carbohydrate degradation; glycolysis; pyruvate from D-glyceraldehyde 3-phosphate: step 2/5. The chain is Phosphoglycerate kinase from Macrococcus caseolyticus (strain JCSC5402) (Macrococcoides caseolyticum).